Consider the following 350-residue polypeptide: MPVLHNRISNDALKAKMLAESEPRTTISFYKYFHIADPKVTRDALYQLFTALNVFGRVYLAHEGINAQISVPASNVETFRAQLYAFDPALEGLRLNIALDDDGKSFWVLRMKVRDRIVADGIDDPHFDASNVGEYLQAAEVNAMLDDPDALFIDMRNHYEYEVGHFENALEIPADTFREQLPKAVEMMQAHKDKKIVMYCTGGIRCEKASAWMKHNGFNKVWHIEGGVIEYARKAREQGLPVRFIGKNFVFDERMGERISDEIIAHCHQCGAPCDSHTNCKNDGCHLLFIQCPVCAEKYKGCCSEICCEESALPPDEQRRRRAGRENGNKIFNKSRGRLNTTLGIPDPTE.

Residues 146–240 (DDPDALFIDM…YARKAREQGL (95 aa)) enclose the Rhodanese domain. Catalysis depends on cysteine 200, which acts as the Cysteine persulfide intermediate.

This sequence belongs to the TrhO family.

The enzyme catalyses uridine(34) in tRNA + AH2 + O2 = 5-hydroxyuridine(34) in tRNA + A + H2O. Its function is as follows. Catalyzes oxygen-dependent 5-hydroxyuridine (ho5U) modification at position 34 in tRNAs, the first step in 5-carboxymethoxyuridine (cmo5U) biosynthesis. May be part of an alternate pathway, which is able to bypass cmo5U biogenesis in a subset of tRNAs under aerobic conditions. This Escherichia coli O45:K1 (strain S88 / ExPEC) protein is tRNA uridine(34) hydroxylase.